Consider the following 155-residue polypeptide: Ribosomal RNA large subunit methyltransferase H (155 aa).

S-adenosyl-L-methionine-binding positions include Leu-72, Gly-103, and Leu-122–Leu-127.

Belongs to the RNA methyltransferase RlmH family. As to quaternary structure, homodimer.

It localises to the cytoplasm. It carries out the reaction pseudouridine(1915) in 23S rRNA + S-adenosyl-L-methionine = N(3)-methylpseudouridine(1915) in 23S rRNA + S-adenosyl-L-homocysteine + H(+). Functionally, specifically methylates the pseudouridine at position 1915 (m3Psi1915) in 23S rRNA. This chain is Ribosomal RNA large subunit methyltransferase H, found in Shigella boydii serotype 18 (strain CDC 3083-94 / BS512).